A 252-amino-acid polypeptide reads, in one-letter code: Triosephosphate isomerase (252 aa).

Substrate is bound at residue 8 to 10 (NWK). The active-site Electrophile is H95. Catalysis depends on E167, which acts as the Proton acceptor. Residues G173, S212, and 233 to 234 (GG) each bind substrate.

This sequence belongs to the triosephosphate isomerase family. In terms of assembly, homodimer.

It localises to the cytoplasm. The catalysed reaction is D-glyceraldehyde 3-phosphate = dihydroxyacetone phosphate. It participates in carbohydrate biosynthesis; gluconeogenesis. Its pathway is carbohydrate degradation; glycolysis; D-glyceraldehyde 3-phosphate from glycerone phosphate: step 1/1. Functionally, involved in the gluconeogenesis. Catalyzes stereospecifically the conversion of dihydroxyacetone phosphate (DHAP) to D-glyceraldehyde-3-phosphate (G3P). The chain is Triosephosphate isomerase from Lawsonia intracellularis (strain PHE/MN1-00).